The sequence spans 660 residues: Arginine--tRNA ligase, cytoplasmic (660 aa).

N-acetylmethionine is present on M1. The interval 1–72 (MDGLVAQCSA…QAERKRPTKN (72 aa)) is could be involved in the assembly of the multisynthetase complex. Residues 200–202 (SPN), H211, Y384, D388, and Q412 contribute to the L-arginine site. A 'HIGH' region motif is present at residues 201-212 (PNIAKEMHVGHL). The segment at 529–543 (NTAAYLLYAFTRIRS) is interaction with tRNA.

The protein belongs to the class-I aminoacyl-tRNA synthetase family. As to quaternary structure, interacts (via N-terminus) with AIMP1 (via N-terminus); this stimulates its catalytic activity. Interacts (via N-terminus) with LARS2 (via C-terminus). Monomer. Part of a multisubunit complex that groups tRNA ligases for Arg (RARS1), Asp (DARS1), Gln (QARS1), Ile (IARS1), Leu (LARS1), Lys (KARS1), Met (MARS1) the bifunctional ligase for Glu and Pro (EPRS1) and the auxiliary subunits AIMP1/p43, AIMP2/p38 and EEF1E1/p18. Interacts with QARS1. Part of a complex composed of RARS1, QARS1 and AIMP1. Detected in dorsal root ganglion.

It is found in the cytoplasm. The protein resides in the cytosol. The enzyme catalyses tRNA(Arg) + L-arginine + ATP = L-arginyl-tRNA(Arg) + AMP + diphosphate. Functionally, forms part of a macromolecular complex that catalyzes the attachment of specific amino acids to cognate tRNAs during protein synthesis. Modulates the secretion of AIMP1 and may be involved in generation of the inflammatory cytokine EMAP2 from AIMP1. This chain is Arginine--tRNA ligase, cytoplasmic (Rars1), found in Rattus norvegicus (Rat).